The sequence spans 127 residues: Small ribosomal subunit protein bS6 (127 aa).

The interval 101-127 is disordered; it reads PMMKEEKARDLLQGAKADAPAEQPAAA. Over residues 115-127 the composition is skewed to low complexity; the sequence is AKADAPAEQPAAA.

The protein belongs to the bacterial ribosomal protein bS6 family.

Its function is as follows. Binds together with bS18 to 16S ribosomal RNA. In Thiobacillus denitrificans (strain ATCC 25259 / T1), this protein is Small ribosomal subunit protein bS6.